The following is a 345-amino-acid chain: Fructose-1,6-bisphosphatase class 1 2 (345 aa).

Residues Glu-90, Asp-109, Leu-111, and Asp-112 each contribute to the Mg(2+) site. Residues 112–115 (DGSS) and Asn-200 each bind substrate. Glu-272 contacts Mg(2+).

This sequence belongs to the FBPase class 1 family. As to quaternary structure, homotetramer. Mg(2+) serves as cofactor.

Its subcellular location is the cytoplasm. The enzyme catalyses beta-D-fructose 1,6-bisphosphate + H2O = beta-D-fructose 6-phosphate + phosphate. It participates in carbohydrate biosynthesis; gluconeogenesis. The sequence is that of Fructose-1,6-bisphosphatase class 1 2 from Nitrobacter hamburgensis (strain DSM 10229 / NCIMB 13809 / X14).